The following is a 360-amino-acid chain: D-alanine--D-alanine ligase (360 aa).

An ATP-grasp domain is found at 149 to 353; the sequence is KKLMAAEGLP…YEELLDVLVQ (205 aa). 176-231 lines the ATP pocket; that stretch reads KNLLGLPVFVKPARGGSSIGISRVTAWEDFNKAVGLARAHDEKVIVESEIVGSEVE. Mg(2+) is bound by residues aspartate 308, glutamate 320, and asparagine 322.

This sequence belongs to the D-alanine--D-alanine ligase family. Mg(2+) serves as cofactor. The cofactor is Mn(2+).

Its subcellular location is the cytoplasm. It carries out the reaction 2 D-alanine + ATP = D-alanyl-D-alanine + ADP + phosphate + H(+). Its pathway is cell wall biogenesis; peptidoglycan biosynthesis. In terms of biological role, cell wall formation. The sequence is that of D-alanine--D-alanine ligase from Corynebacterium glutamicum (strain R).